The chain runs to 125 residues: Large ribosomal subunit protein uL22 (125 aa).

The protein belongs to the universal ribosomal protein uL22 family. Part of the 50S ribosomal subunit.

This protein binds specifically to 23S rRNA; its binding is stimulated by other ribosomal proteins, e.g. L4, L17, and L20. It is important during the early stages of 50S assembly. It makes multiple contacts with different domains of the 23S rRNA in the assembled 50S subunit and ribosome. Functionally, the globular domain of the protein is located near the polypeptide exit tunnel on the outside of the subunit, while an extended beta-hairpin is found that lines the wall of the exit tunnel in the center of the 70S ribosome. The chain is Large ribosomal subunit protein uL22 from Erythrobacter litoralis (strain HTCC2594).